Reading from the N-terminus, the 355-residue chain is Peptide chain release factor 1 (355 aa).

Glutamine 231 carries the N5-methylglutamine modification. Positions 281-291 (ERLAKESEARK) are enriched in basic and acidic residues. Residues 281 to 302 (ERLAKESEARKSQVGSGDRSER) form a disordered region.

Belongs to the prokaryotic/mitochondrial release factor family. Methylated by PrmC. Methylation increases the termination efficiency of RF1.

It localises to the cytoplasm. Functionally, peptide chain release factor 1 directs the termination of translation in response to the peptide chain termination codons UAG and UAA. In Campylobacter jejuni subsp. doylei (strain ATCC BAA-1458 / RM4099 / 269.97), this protein is Peptide chain release factor 1.